A 527-amino-acid chain; its full sequence is Glucose-6-phosphate isomerase (527 aa).

Glutamate 323 (proton donor) is an active-site residue. Catalysis depends on residues histidine 352 and lysine 454.

It belongs to the GPI family.

It localises to the cytoplasm. It catalyses the reaction alpha-D-glucose 6-phosphate = beta-D-fructose 6-phosphate. It functions in the pathway carbohydrate biosynthesis; gluconeogenesis. Its pathway is carbohydrate degradation; glycolysis; D-glyceraldehyde 3-phosphate and glycerone phosphate from D-glucose: step 2/4. Functionally, catalyzes the reversible isomerization of glucose-6-phosphate to fructose-6-phosphate. The polypeptide is Glucose-6-phosphate isomerase (Prochlorococcus marinus (strain MIT 9301)).